Consider the following 364-residue polypeptide: Probable protein phosphatase methylesterase 1 (364 aa).

Residues 1-53 (MSDDKLDTLPDLQSETSHVTTPHRQNDLLRQAVTHGRPPPVPSTSTSGKKREM) form a disordered region. Over residues 11 to 23 (DLQSETSHVTTPH) the composition is skewed to polar residues. Residues Ser-164, Asp-190, and His-316 contribute to the active site.

Belongs to the AB hydrolase superfamily.

The catalysed reaction is [phosphatase 2A protein]-C-terminal L-leucine methyl ester + H2O = [phosphatase 2A protein]-C-terminal L-leucine + methanol + H(+). Functionally, demethylates proteins that have been reversibly carboxymethylated. The sequence is that of Probable protein phosphatase methylesterase 1 from Caenorhabditis elegans.